Consider the following 454-residue polypeptide: Putative serine carboxypeptidase-like 23 (454 aa).

An N-terminal signal peptide occupies residues 1 to 22; the sequence is MARIHLIIILLVISSTSSSSSS. Asparagine 52, asparagine 102, and asparagine 136 each carry an N-linked (GlcNAc...) asparagine glycan. 3 disulfides stabilise this stretch: cysteine 85–cysteine 338, cysteine 247–cysteine 258, and cysteine 282–cysteine 306. The active site involves serine 178. 2 N-linked (GlcNAc...) asparagine glycosylation sites follow: asparagine 287 and asparagine 327. Residues aspartate 375 and histidine 427 contribute to the active site.

Belongs to the peptidase S10 family. In terms of tissue distribution, expression not detected.

The protein localises to the secreted. In terms of biological role, probable carboxypeptidase. The chain is Putative serine carboxypeptidase-like 23 (SCPL23) from Arabidopsis thaliana (Mouse-ear cress).